We begin with the raw amino-acid sequence, 117 residues long: 16 kDa protein (117 aa).

The polypeptide is 16 kDa protein (Tobacco rattle virus (strain PLB)).